Consider the following 553-residue polypeptide: Urocanate hydratase (553 aa).

Residues 51–52 (GG), Q129, 175–177 (GMG), E195, R200, 241–242 (NA), 262–266 (QTSAH), 272–273 (YL), and Y321 each bind NAD(+). C409 is a catalytic residue. Residue G491 participates in NAD(+) binding.

It belongs to the urocanase family. It depends on NAD(+) as a cofactor.

It localises to the cytoplasm. The enzyme catalyses 4-imidazolone-5-propanoate = trans-urocanate + H2O. Its pathway is amino-acid degradation; L-histidine degradation into L-glutamate; N-formimidoyl-L-glutamate from L-histidine: step 2/3. Its function is as follows. Catalyzes the conversion of urocanate to 4-imidazolone-5-propionate. The chain is Urocanate hydratase from Sphingopyxis alaskensis (strain DSM 13593 / LMG 18877 / RB2256) (Sphingomonas alaskensis).